Reading from the N-terminus, the 279-residue chain is Thymidylate synthase (279 aa).

Arg-21 lines the dUMP pocket. Residue His-51 coordinates (6R)-5,10-methylene-5,6,7,8-tetrahydrofolate. 126–127 (RR) contributes to the dUMP binding site. The active-site Nucleophile is the Cys-159. DUMP-binding positions include 179–182 (RSAD), Asn-190, and 220–222 (HLY). Asp-182 lines the (6R)-5,10-methylene-5,6,7,8-tetrahydrofolate pocket. Ala-278 contributes to the (6R)-5,10-methylene-5,6,7,8-tetrahydrofolate binding site.

Belongs to the thymidylate synthase family. Bacterial-type ThyA subfamily. Homodimer.

The protein resides in the cytoplasm. It carries out the reaction dUMP + (6R)-5,10-methylene-5,6,7,8-tetrahydrofolate = 7,8-dihydrofolate + dTMP. The protein operates within pyrimidine metabolism; dTTP biosynthesis. Its function is as follows. Catalyzes the reductive methylation of 2'-deoxyuridine-5'-monophosphate (dUMP) to 2'-deoxythymidine-5'-monophosphate (dTMP) while utilizing 5,10-methylenetetrahydrofolate (mTHF) as the methyl donor and reductant in the reaction, yielding dihydrofolate (DHF) as a by-product. This enzymatic reaction provides an intracellular de novo source of dTMP, an essential precursor for DNA biosynthesis. The protein is Thymidylate synthase of Marinobacter nauticus (strain ATCC 700491 / DSM 11845 / VT8) (Marinobacter aquaeolei).